We begin with the raw amino-acid sequence, 487 residues long: Beta-barrel assembly-enhancing protease (487 aa).

The first 27 residues, 1 to 27 (MFRQLKKNLVATLIAAMTIGQVAPAFA), serve as a signal peptide directing secretion. His136 serves as a coordination point for Zn(2+). Glu137 is an active-site residue. 2 residues coordinate Zn(2+): His140 and Glu201. Asp205 functions as the Proton donor in the catalytic mechanism. TPR repeat units lie at residues 309–342 (RAAQ…EPGN), 344–376 (WYLD…RTNP), 377–409 (VLQL…NKDD), and 427–460 (DQEL…VKLG).

It belongs to the peptidase M48 family. BepA subfamily. Interacts with BamA and LoiP. Zn(2+) serves as cofactor.

The protein resides in the periplasm. Its activity is regulated as follows. Protease activity is inhibited by the metal chelating reagents 1,10-phenanthroline and EDTA. Functionally, functions both as a chaperone and a metalloprotease. Maintains the integrity of the outer membrane by promoting either the assembly or the elimination of outer membrane proteins, depending on their folding state. Promotes disulfide rearrangement of LptD during its biogenesis, and proteolytic degradation of LptD and BamA when their proper assembly is compromised. May facilitate membrane attachment of LoiP under unfavorable conditions. The protein is Beta-barrel assembly-enhancing protease of Escherichia coli (strain K12).